The chain runs to 287 residues: Gliotoxin thiomethyltransferase GtmA (287 aa).

The S-adenosyl-L-methionine site is built by Thr-27 and Ala-54. A disulfide bond links Cys-55 and Cys-80. Asp-82, Met-87, Asn-109, Ala-110, Ala-126, and Arg-248 together coordinate S-adenosyl-L-methionine.

The protein belongs to the class I-like SAM-binding methyltransferase superfamily.

Its subcellular location is the cytoplasm. The enzyme catalyses a thiol + S-adenosyl-L-methionine = a methyl thioether + S-adenosyl-L-homocysteine + H(+). Functionally, S-methyltransferase that catalyzes the irreversible conversion of the secondary metabolite gliotoxin to bis(methylthio)gliotoxin (BmGT). Gliotoxin, a member of the epipolythiodioxopiperazine (ETP) class of toxins, is characterized by a disulfide bridged cyclic dipeptide. Its thiol groups are essential for bioactivity, as they conjugate to sulfur-containing proteins, disturb the intracellular redox equilibrium, and generate reactive oxygen species by cycling between reduced and oxidized states. The enzyme prevents self-intoxication of the fungus by irreversible conversion of the toxic gliotoxin to a biologically inactive bis-thiomethylated derivative. Appears to negatively regulate gliotoxin biosynthesis. The sequence is that of Gliotoxin thiomethyltransferase GtmA from Aspergillus fumigatus (strain ATCC MYA-4609 / CBS 101355 / FGSC A1100 / Af293) (Neosartorya fumigata).